Here is a 364-residue protein sequence, read N- to C-terminus: Alanine racemase (364 aa).

The Proton acceptor; specific for D-alanine role is filled by Lys-39. Lys-39 bears the N6-(pyridoxal phosphate)lysine mark. Arg-137 serves as a coordination point for substrate. Catalysis depends on Tyr-258, which acts as the Proton acceptor; specific for L-alanine. Met-306 provides a ligand contact to substrate.

The protein belongs to the alanine racemase family. It depends on pyridoxal 5'-phosphate as a cofactor.

The enzyme catalyses L-alanine = D-alanine. The protein operates within amino-acid biosynthesis; D-alanine biosynthesis; D-alanine from L-alanine: step 1/1. Functionally, catalyzes the interconversion of L-alanine and D-alanine. May also act on other amino acids. This Methylobacterium sp. (strain 4-46) protein is Alanine racemase (alr).